The following is a 173-amino-acid chain: Crossover junction endodeoxyribonuclease RuvC (173 aa).

Residues D8, E67, and D139 contribute to the active site. Mg(2+) contacts are provided by D8, E67, and D139.

It belongs to the RuvC family. In terms of assembly, homodimer which binds Holliday junction (HJ) DNA. The HJ becomes 2-fold symmetrical on binding to RuvC with unstacked arms; it has a different conformation from HJ DNA in complex with RuvA. In the full resolvosome a probable DNA-RuvA(4)-RuvB(12)-RuvC(2) complex forms which resolves the HJ. Mg(2+) serves as cofactor.

The protein resides in the cytoplasm. It catalyses the reaction Endonucleolytic cleavage at a junction such as a reciprocal single-stranded crossover between two homologous DNA duplexes (Holliday junction).. Its function is as follows. The RuvA-RuvB-RuvC complex processes Holliday junction (HJ) DNA during genetic recombination and DNA repair. Endonuclease that resolves HJ intermediates. Cleaves cruciform DNA by making single-stranded nicks across the HJ at symmetrical positions within the homologous arms, yielding a 5'-phosphate and a 3'-hydroxyl group; requires a central core of homology in the junction. The consensus cleavage sequence is 5'-(A/T)TT(C/G)-3'. Cleavage occurs on the 3'-side of the TT dinucleotide at the point of strand exchange. HJ branch migration catalyzed by RuvA-RuvB allows RuvC to scan DNA until it finds its consensus sequence, where it cleaves and resolves the cruciform DNA. The chain is Crossover junction endodeoxyribonuclease RuvC from Serratia proteamaculans (strain 568).